A 335-amino-acid polypeptide reads, in one-letter code: 2,4-dienoyl-CoA reductase [(3E)-enoyl-CoA-producing], mitochondrial (335 aa).

The transit peptide at 1 to 34 directs the protein to the mitochondrion; the sequence is MKLPARVFFTLGSRLPCGLAPRRFFSYGTKILYQ. Residues lysine 42 and lysine 49 each carry the N6-acetyllysine; alternate modification. 2 positions are modified to N6-succinyllysine; alternate: lysine 42 and lysine 49. 66-71 is an NADP(+) binding site; it reads GGGTGL. A Phosphothreonine modification is found at threonine 69. An N6-succinyllysine modification is found at lysine 73. NADP(+) is bound at residue arginine 91. Residue arginine 91 coordinates substrate. N6-acetyllysine; alternate is present on lysine 97. An N6-succinyllysine; alternate modification is found at lysine 97. Aspartate 117 is an NADP(+) binding site. Positions 119, 149, and 157 each coordinate substrate. The active-site Proton acceptor is the tyrosine 199. Lysine 214 serves as a coordination point for NADP(+). Lysine 230 is subject to N6-acetyllysine. NADP(+) is bound at residue 240-243; the sequence is PGPI. At lysine 244 the chain carries N6-acetyllysine; alternate. N6-succinyllysine; alternate is present on lysine 244. Arginine 251 contacts substrate. Residues lysine 260 and lysine 319 each carry the N6-acetyllysine; alternate modification. Lysine 260 and lysine 319 each carry N6-succinyllysine; alternate.

This sequence belongs to the short-chain dehydrogenases/reductases (SDR) family. 2,4-dienoyl-CoA reductase subfamily. As to quaternary structure, homotetramer. Heart = liver = pancreas &gt; kidney &gt;&gt; skeletal muscle = lung.

It is found in the mitochondrion. The catalysed reaction is a (2E,4E)-dienoyl-CoA + NADPH + H(+) = a 4,5-saturated-(3E)-enoyl-CoA + NADP(+). The enzyme catalyses a (2E,4Z)-dienoyl-CoA + NADPH + H(+) = a 4,5-saturated-(3E)-enoyl-CoA + NADP(+). It carries out the reaction (2E,4E)-hexadienoyl-CoA + NADPH + H(+) = (3E)-hexenoyl-CoA + NADP(+). Its function is as follows. Auxiliary enzyme of beta-oxidation. It participates in the metabolism of unsaturated fatty enoyl-CoA esters having double bonds in both even- and odd-numbered positions in mitochondria. Catalyzes the NADP-dependent reduction of 2,4-dienoyl-CoA to yield trans-3-enoyl-CoA. The sequence is that of 2,4-dienoyl-CoA reductase [(3E)-enoyl-CoA-producing], mitochondrial (DECR1) from Homo sapiens (Human).